Reading from the N-terminus, the 205-residue chain is Urease accessory protein UreG (205 aa).

GTP is bound at residue 11-18; it reads GPVGSGKT.

It belongs to the SIMIBI class G3E GTPase family. UreG subfamily. In terms of assembly, homodimer. UreD, UreF and UreG form a complex that acts as a GTP-hydrolysis-dependent molecular chaperone, activating the urease apoprotein by helping to assemble the nickel containing metallocenter of UreC. The UreE protein probably delivers the nickel.

It localises to the cytoplasm. In terms of biological role, facilitates the functional incorporation of the urease nickel metallocenter. This process requires GTP hydrolysis, probably effectuated by UreG. The sequence is that of Urease accessory protein UreG from Prochlorococcus marinus (strain NATL1A).